A 1018-amino-acid chain; its full sequence is Transmembrane protein 132A (1018 aa).

Residues 1–32 form the signal peptide; the sequence is MTERKAAAPRGPYGAWFCLLVALALEVVRVSS. Topologically, residues 33–846 are extracellular; the sequence is NHDTLDPIYL…VTDLELGMYA (814 aa). N-linked (GlcNAc...) asparagine glycosylation occurs at N276. Residues 606 to 911 form a binds to HSPA5/GRP78 region; the sequence is IEVRSPLSDA…QLDRCSSSGP (306 aa). The segment at 666–1018 is confers cellular localization similar to full-length form; that stretch reads LPAPKQEVAL…NYMERIRGSS (353 aa). The span at 807–818 shows a compositional bias: basic and acidic residues; it reads ERAEEEAGKEEN. The disordered stretch occupies residues 807 to 833; it reads ERAEEEAGKEENEAKEEEEDEEEMVPA. Residues 819–830 are compositionally biased toward acidic residues; the sequence is EAKEEEEDEEEM. The helical transmembrane segment at 847–867 threads the bilayer; sequence LLGIFCLAILIFLVNGVVFVL. At 868 to 1018 the chain is on the cytoplasmic side; sequence RYQRKEPPDS…NYMERIRGSS (151 aa). The interval 900–956 is disordered; sequence SRQLDRCSSSGPPKGEGGCPCESGAGGDASTVAPSASESPAGSSSTLARKEAGGRRK. Composition is skewed to low complexity over residues 906–922 and 932–944; these read CSSS…PCES and APSA…GSSS.

The protein belongs to the TMEM132 family. Interacts with HSPA5/GRP78.

Its subcellular location is the golgi apparatus membrane. The protein resides in the endoplasmic reticulum membrane. Its function is as follows. May play a role in embryonic and postnatal development of the brain. Increased resistance to cell death induced by serum starvation in cultured cells. Regulates cAMP-induced GFAP gene expression via STAT3 phosphorylation. The polypeptide is Transmembrane protein 132A (Tmem132a) (Mus musculus (Mouse)).